The following is a 118-amino-acid chain: MARIAGINIPDHKHTVIALTSIFGIGKTRSQSICASTGIAEHVKISELSEEQIEQLREAVAKFTVEGDLRREVTLSIKRLMDLGTYRGLRHRRGLPVRGQRTKTNARTRKGPRKPIKK.

The segment at 91–118 (HRRGLPVRGQRTKTNARTRKGPRKPIKK) is disordered.

Belongs to the universal ribosomal protein uS13 family. Part of the 30S ribosomal subunit. Forms a loose heterodimer with protein S19. Forms two bridges to the 50S subunit in the 70S ribosome.

Its function is as follows. Located at the top of the head of the 30S subunit, it contacts several helices of the 16S rRNA. In the 70S ribosome it contacts the 23S rRNA (bridge B1a) and protein L5 of the 50S subunit (bridge B1b), connecting the 2 subunits; these bridges are implicated in subunit movement. Contacts the tRNAs in the A and P-sites. This Serratia proteamaculans (strain 568) protein is Small ribosomal subunit protein uS13.